A 390-amino-acid polypeptide reads, in one-letter code: tRNA-specific 2-thiouridylase MnmA (390 aa).

ATP contacts are provided by residues 36–43 and Met62; that span reads GMSGGVDS. The interaction with target base in tRNA stretch occupies residues 122–124; sequence NPD. The active-site Nucleophile is Cys127. Cys127 and Cys223 are oxidised to a cystine. Gly151 contributes to the ATP binding site. An interaction with tRNA region spans residues 173-175; it reads KDQ. The active-site Cysteine persulfide intermediate is the Cys223. Residues 335 to 336 form an interaction with tRNA region; the sequence is RY.

Belongs to the MnmA/TRMU family.

Its subcellular location is the cytoplasm. It carries out the reaction S-sulfanyl-L-cysteinyl-[protein] + uridine(34) in tRNA + AH2 + ATP = 2-thiouridine(34) in tRNA + L-cysteinyl-[protein] + A + AMP + diphosphate + H(+). Its function is as follows. Catalyzes the 2-thiolation of uridine at the wobble position (U34) of tRNA, leading to the formation of s(2)U34. The sequence is that of tRNA-specific 2-thiouridylase MnmA from Marinomonas sp. (strain MWYL1).